The primary structure comprises 438 residues: 3-phosphoshikimate 1-carboxyvinyltransferase (438 aa).

Positions 26, 27, and 31 each coordinate 3-phosphoshikimate. Lysine 26 provides a ligand contact to phosphoenolpyruvate. Residues glycine 99 and arginine 127 each coordinate phosphoenolpyruvate. Residues serine 172, glutamine 174, aspartate 320, and lysine 347 each coordinate 3-phosphoshikimate. A phosphoenolpyruvate-binding site is contributed by glutamine 174. The active-site Proton acceptor is the aspartate 320. 2 residues coordinate phosphoenolpyruvate: arginine 351 and arginine 392.

This sequence belongs to the EPSP synthase family. As to quaternary structure, monomer.

The protein resides in the cytoplasm. It carries out the reaction 3-phosphoshikimate + phosphoenolpyruvate = 5-O-(1-carboxyvinyl)-3-phosphoshikimate + phosphate. It participates in metabolic intermediate biosynthesis; chorismate biosynthesis; chorismate from D-erythrose 4-phosphate and phosphoenolpyruvate: step 6/7. Catalyzes the transfer of the enolpyruvyl moiety of phosphoenolpyruvate (PEP) to the 5-hydroxyl of shikimate-3-phosphate (S3P) to produce enolpyruvyl shikimate-3-phosphate and inorganic phosphate. This Xanthomonas campestris pv. campestris (strain B100) protein is 3-phosphoshikimate 1-carboxyvinyltransferase.